A 236-amino-acid chain; its full sequence is Uridylate kinase (236 aa).

Residue 12-15 participates in ATP binding; that stretch reads KLSG. The involved in allosteric activation by GTP stretch occupies residues 20 to 25; sequence GEKGFG. Glycine 54 contributes to the UMP binding site. 2 residues coordinate ATP: glycine 55 and arginine 59. UMP is bound by residues aspartate 72 and 133-140; that span reads TGNPYFST. Asparagine 161, tyrosine 166, and aspartate 169 together coordinate ATP.

It belongs to the UMP kinase family. In terms of assembly, homohexamer.

The protein resides in the cytoplasm. The enzyme catalyses UMP + ATP = UDP + ADP. It functions in the pathway pyrimidine metabolism; CTP biosynthesis via de novo pathway; UDP from UMP (UMPK route): step 1/1. With respect to regulation, allosterically activated by GTP. Inhibited by UTP. Its function is as follows. Catalyzes the reversible phosphorylation of UMP to UDP. The polypeptide is Uridylate kinase (Alkaliphilus metalliredigens (strain QYMF)).